Here is a 405-residue protein sequence, read N- to C-terminus: S-adenosylmethionine synthase (405 aa).

Position 141 to 146 (141 to 146 (GQGSVD)) interacts with ATP.

It belongs to the AdoMet synthase 2 family. The cofactor is Mg(2+).

It catalyses the reaction L-methionine + ATP + H2O = S-adenosyl-L-methionine + phosphate + diphosphate. The protein operates within amino-acid biosynthesis; S-adenosyl-L-methionine biosynthesis; S-adenosyl-L-methionine from L-methionine: step 1/1. In terms of biological role, catalyzes the formation of S-adenosylmethionine from methionine and ATP. The sequence is that of S-adenosylmethionine synthase from Methanococcus maripaludis (Methanococcus deltae).